Consider the following 364-residue polypeptide: Tyrosine--tRNA ligase (364 aa).

Tyr-39 is an L-tyrosine binding site. ATP is bound by residues His-49 and Trp-52. Residues Tyr-165, Gln-169, Asp-172, and Gln-187 each coordinate L-tyrosine. Positions 238–242 (KMSKS) match the 'KMSKS' region motif. Lys-241 serves as a coordination point for ATP.

This sequence belongs to the class-I aminoacyl-tRNA synthetase family. TyrS type 4 subfamily. In terms of assembly, homodimer.

The protein localises to the cytoplasm. It catalyses the reaction tRNA(Tyr) + L-tyrosine + ATP = L-tyrosyl-tRNA(Tyr) + AMP + diphosphate + H(+). Functionally, catalyzes the attachment of tyrosine to tRNA(Tyr) in a two-step reaction: tyrosine is first activated by ATP to form Tyr-AMP and then transferred to the acceptor end of tRNA(Tyr). The chain is Tyrosine--tRNA ligase from Aeropyrum pernix (strain ATCC 700893 / DSM 11879 / JCM 9820 / NBRC 100138 / K1).